A 190-amino-acid chain; its full sequence is 3-isopropylmalate dehydratase small subunit (190 aa).

It belongs to the LeuD family. LeuD type 1 subfamily. In terms of assembly, heterodimer of LeuC and LeuD.

The enzyme catalyses (2R,3S)-3-isopropylmalate = (2S)-2-isopropylmalate. It participates in amino-acid biosynthesis; L-leucine biosynthesis; L-leucine from 3-methyl-2-oxobutanoate: step 2/4. Functionally, catalyzes the isomerization between 2-isopropylmalate and 3-isopropylmalate, via the formation of 2-isopropylmaleate. In Staphylococcus aureus (strain MSSA476), this protein is 3-isopropylmalate dehydratase small subunit.